Reading from the N-terminus, the 1792-residue chain is Brefeldin A-inhibited guanine nucleotide-exchange protein 2 (1792 aa).

M1 carries the N-acetylmethionine modification. The DCB; DCB:DCB domain and DCB:HUS domain interaction stretch occupies residues 2–224 (QESQTKSMFV…KPQSPVIQAT (223 aa)). The disordered stretch occupies residues 207-294 (ELEKPMQSKP…SRGTDSGAQE (88 aa)). S214, S218, and S227 each carry phosphoserine. A compositionally biased stretch (polar residues) spans 214–225 (SKPQSPVIQATA). The segment covering 233 to 243 (LKQSQAQSKPT) has biased composition (polar residues). Position 244 is a phosphothreonine (T244). S355 and S356 each carry phosphoserine. The segment at 515–535 (ADAQCVVDIYVNYDCDLNAAN) is HUS; DCB:HUS domain interaction. Phosphoserine is present on S621. T623 bears the Phosphothreonine mark. The residue at position 624 (S624) is a Phosphoserine. T633 is modified (phosphothreonine). Residues 661-792 (FNKKPKRGIQ…IIMLTTDLHS (132 aa)) form the SEC7 domain. S707, S1518, S1520, S1521, S1532, S1535, S1541, and S1789 each carry phosphoserine.

In terms of assembly, homodimer. Interacts with ARFGEF1/BIG1; both proteins are probably part of the same or very similar macromolecular complexes. Interacts with PRKAR1A, PRKAR2A, PRKAR1B, PRKAR2B, PPP1CC, PDE3A, TNFRSF1A, MYCBP and EXOC7. Interacts with GABRB1, GABRB2 and GABRB3. In terms of processing, in vitro phosphorylated by PKA reducing its GEF activity and dephosphorylated by phosphatase PP1.

It localises to the cytoplasm. The protein localises to the membrane. It is found in the golgi apparatus. Its subcellular location is the perinuclear region. The protein resides in the trans-Golgi network. It localises to the endosome. The protein localises to the cytoskeleton. It is found in the microtubule organizing center. Its subcellular location is the centrosome. The protein resides in the cell projection. It localises to the dendrite. The protein localises to the cytoplasmic vesicle. It is found in the synapse. Inhibited by brefeldin A. Functionally, promotes guanine-nucleotide exchange on ARF1 and ARF3 and to a lower extent on ARF5 and ARF6. Promotes the activation of ARF1/ARF5/ARF6 through replacement of GDP with GTP. Involved in the regulation of Golgi vesicular transport. Required for the integrity of the endosomal compartment. Involved in trafficking from the trans-Golgi network (TGN) to endosomes and is required for membrane association of the AP-1 complex and GGA1. Seems to be involved in recycling of the transferrin receptor from recycling endosomes to the plasma membrane. Probably is involved in the exit of GABA(A) receptors from the endoplasmic reticulum. Involved in constitutive release of tumor necrosis factor receptor 1 via exosome-like vesicles; the function seems to involve PKA and specifically PRKAR2B. Proposed to act as A kinase-anchoring protein (AKAP) and may mediate crosstalk between Arf and PKA pathways. In Mus musculus (Mouse), this protein is Brefeldin A-inhibited guanine nucleotide-exchange protein 2 (Arfgef2).